The chain runs to 269 residues: Tryptophan synthase alpha chain (269 aa).

Catalysis depends on proton acceptor residues E49 and D60.

Belongs to the TrpA family. As to quaternary structure, tetramer of two alpha and two beta chains.

The catalysed reaction is (1S,2R)-1-C-(indol-3-yl)glycerol 3-phosphate + L-serine = D-glyceraldehyde 3-phosphate + L-tryptophan + H2O. It participates in amino-acid biosynthesis; L-tryptophan biosynthesis; L-tryptophan from chorismate: step 5/5. The alpha subunit is responsible for the aldol cleavage of indoleglycerol phosphate to indole and glyceraldehyde 3-phosphate. The protein is Tryptophan synthase alpha chain of Klebsiella aerogenes (Enterobacter aerogenes).